The chain runs to 428 residues: Glutamate-1-semialdehyde 2,1-aminomutase (428 aa).

Position 265 is an N6-(pyridoxal phosphate)lysine (K265).

Belongs to the class-III pyridoxal-phosphate-dependent aminotransferase family. HemL subfamily. As to quaternary structure, homodimer. The cofactor is pyridoxal 5'-phosphate.

Its subcellular location is the cytoplasm. The enzyme catalyses (S)-4-amino-5-oxopentanoate = 5-aminolevulinate. Its pathway is porphyrin-containing compound metabolism; protoporphyrin-IX biosynthesis; 5-aminolevulinate from L-glutamyl-tRNA(Glu): step 2/2. The sequence is that of Glutamate-1-semialdehyde 2,1-aminomutase from Ruthia magnifica subsp. Calyptogena magnifica.